A 277-amino-acid polypeptide reads, in one-letter code: Zinc finger protein 511 (277 aa).

3 C2H2-type zinc fingers span residues 96 to 121, 123 to 146, and 160 to 185; these read FRCH…NALH, NVCS…LEWH, and YECL…IRTH. Residues 225–244 form a disordered region; that stretch reads ESSESMDFSLTPEPVETEPM.

The protein belongs to the krueppel C2H2-type zinc-finger protein family.

The protein resides in the nucleus. May be involved in transcriptional regulation. The protein is Zinc finger protein 511 (znf511) of Danio rerio (Zebrafish).